A 78-amino-acid chain; its full sequence is MKKQKLIDMEGVVTESLPNTMFRVCLDNGCQVLTHVSGRMRRNYIRILPGDRVKVESSPYDLTKGRITYRFHTKSSND.

An S1-like domain is found at 1–72 (MKKQKLIDME…TKGRITYRFH (72 aa)).

It belongs to the IF-1 family. In terms of assembly, component of the 30S ribosomal translation pre-initiation complex which assembles on the 30S ribosome in the order IF-2 and IF-3, IF-1 and N-formylmethionyl-tRNA(fMet); mRNA recruitment can occur at any time during PIC assembly.

The protein localises to the plastid. Its subcellular location is the chloroplast. In terms of biological role, one of the essential components for the initiation of protein synthesis. Stabilizes the binding of IF-2 and IF-3 on the 30S subunit to which N-formylmethionyl-tRNA(fMet) subsequently binds. Helps modulate mRNA selection, yielding the 30S pre-initiation complex (PIC). Upon addition of the 50S ribosomal subunit IF-1, IF-2 and IF-3 are released leaving the mature 70S translation initiation complex. The polypeptide is Translation initiation factor IF-1, chloroplastic (Huperzia lucidula (Shining clubmoss)).